A 374-amino-acid chain; its full sequence is tRNA (guanine(26)-N(2))-dimethyltransferase (374 aa).

Residues 4 to 371 (IEIREGKASL…KEIDEIVNCI (368 aa)) form the Trm1 methyltransferase domain. Positions 44, 69, 87, 113, and 114 each coordinate S-adenosyl-L-methionine. Zn(2+)-binding residues include C244, C247, C261, and C264.

It belongs to the class I-like SAM-binding methyltransferase superfamily. Trm1 family.

It carries out the reaction guanosine(26) in tRNA + 2 S-adenosyl-L-methionine = N(2)-dimethylguanosine(26) in tRNA + 2 S-adenosyl-L-homocysteine + 2 H(+). Functionally, dimethylates a single guanine residue at position 26 of a number of tRNAs using S-adenosyl-L-methionine as donor of the methyl groups. The sequence is that of tRNA (guanine(26)-N(2))-dimethyltransferase from Sulfurisphaera tokodaii (strain DSM 16993 / JCM 10545 / NBRC 100140 / 7) (Sulfolobus tokodaii).